Here is a 248-residue protein sequence, read N- to C-terminus: Probable transcriptional regulatory protein RHOS4_22610 (248 aa).

The disordered stretch occupies residues 1–21; it reads MAGHSKWANIQHRKGKQDKLR.

It belongs to the TACO1 family.

The protein resides in the cytoplasm. The chain is Probable transcriptional regulatory protein RHOS4_22610 from Cereibacter sphaeroides (strain ATCC 17023 / DSM 158 / JCM 6121 / CCUG 31486 / LMG 2827 / NBRC 12203 / NCIMB 8253 / ATH 2.4.1.) (Rhodobacter sphaeroides).